The sequence spans 283 residues: MRVYEALKWASSFLQENGRDENAGEIVLCHVLKVNRTGLLMNMREEITEEQEKSFTEFIHKHVEGIPIQYMIGYEIFYGRSFFVNEEVLIPRPETEELIVGVLERIERHFGDEKLHVADIGTGSGAISITLALENKNLHVYTVDIAQESIEVAKENAKALGAEVTFYHGDLLSPFHKTGQKLDVVVSNPPYIPEEDWRGLSPVVKEHEPKRALVGGEDGLDFYRRFMEELPNVLQKKAIVAFEIGVGQGEDVKRLLQQAFPHAHVEVVFDINGKDRMVFAEME.

S-adenosyl-L-methionine is bound by residues 121–125 (GTGSG), Asp-144, and Asn-188. Residue 188–191 (NPPY) participates in substrate binding.

Belongs to the protein N5-glutamine methyltransferase family. PrmC subfamily.

The catalysed reaction is L-glutaminyl-[peptide chain release factor] + S-adenosyl-L-methionine = N(5)-methyl-L-glutaminyl-[peptide chain release factor] + S-adenosyl-L-homocysteine + H(+). Functionally, methylates the class 1 translation termination release factors RF1/PrfA and RF2/PrfB on the glutamine residue of the universally conserved GGQ motif. This is Release factor glutamine methyltransferase from Bacillus cereus (strain ATCC 14579 / DSM 31 / CCUG 7414 / JCM 2152 / NBRC 15305 / NCIMB 9373 / NCTC 2599 / NRRL B-3711).